The primary structure comprises 167 residues: Ribonuclease P protein subunit p20 (167 aa).

The segment at 1–36 (MMGSNYPEHGTKPRSAKYHKQQNHRVVRKQPPRPAV) is disordered. The segment covering 12 to 31 (KPRSAKYHKQQNHRVVRKQP) has biased composition (basic residues).

As to quaternary structure, interacts with Smn.

The protein resides in the nucleus. It is found in the nucleolus. Its subcellular location is the cytoplasm. It localises to the cytoplasmic granule. Component of ribonuclease P, a protein complex that generates mature tRNA molecules by cleaving their 5'-ends. Also a component of RNase MRP complex, which cleaves pre-rRNA sequences. The sequence is that of Ribonuclease P protein subunit p20 from Drosophila melanogaster (Fruit fly).